The following is a 199-amino-acid chain: Recombination protein RecR (199 aa).

The segment at 58–73 (CKVCTNLTDQEVCNIC) adopts a C4-type zinc-finger fold. One can recognise a Toprim domain in the interval 81–176 (LLICVVEDPR…KVSRIAHGIP (96 aa)).

This sequence belongs to the RecR family.

May play a role in DNA repair. It seems to be involved in an RecBC-independent recombinational process of DNA repair. It may act with RecF and RecO. The chain is Recombination protein RecR from Alkaliphilus oremlandii (strain OhILAs) (Clostridium oremlandii (strain OhILAs)).